Here is a 437-residue protein sequence, read N- to C-terminus: Ribosomal protein uS12 methylthiotransferase RimO (437 aa).

The MTTase N-terminal domain maps to 4 to 114 (PRVSFVSLGC…VMSAVHEAVP (111 aa)). Residues cysteine 13, cysteine 49, cysteine 78, cysteine 145, cysteine 149, and cysteine 152 each coordinate [4Fe-4S] cluster. The Radical SAM core domain occupies 131-369 (LTPRHYAYLK…MAKQQQISTN (239 aa)). A TRAM domain is found at 372–437 (KKKVGKRLPV…DAYDLHGIAV (66 aa)).

The protein belongs to the methylthiotransferase family. RimO subfamily. Requires [4Fe-4S] cluster as cofactor.

The protein localises to the cytoplasm. It catalyses the reaction L-aspartate(89)-[ribosomal protein uS12]-hydrogen + (sulfur carrier)-SH + AH2 + 2 S-adenosyl-L-methionine = 3-methylsulfanyl-L-aspartate(89)-[ribosomal protein uS12]-hydrogen + (sulfur carrier)-H + 5'-deoxyadenosine + L-methionine + A + S-adenosyl-L-homocysteine + 2 H(+). Catalyzes the methylthiolation of an aspartic acid residue of ribosomal protein uS12. In Brucella anthropi (strain ATCC 49188 / DSM 6882 / CCUG 24695 / JCM 21032 / LMG 3331 / NBRC 15819 / NCTC 12168 / Alc 37) (Ochrobactrum anthropi), this protein is Ribosomal protein uS12 methylthiotransferase RimO.